Here is a 527-residue protein sequence, read N- to C-terminus: Peptide chain release factor 3 (527 aa).

The tr-type G domain occupies 9-278; it reads DIRRTFAIIS…GLTQWAPKPQ (270 aa). Residues 18–25, 86–90, and 140–143 each bind GTP; these read SHPDAGKT, DTPGH, and NKCD.

The protein belongs to the TRAFAC class translation factor GTPase superfamily. Classic translation factor GTPase family. PrfC subfamily.

Its subcellular location is the cytoplasm. Its function is as follows. Increases the formation of ribosomal termination complexes and stimulates activities of RF-1 and RF-2. It binds guanine nucleotides and has strong preference for UGA stop codons. It may interact directly with the ribosome. The stimulation of RF-1 and RF-2 is significantly reduced by GTP and GDP, but not by GMP. The sequence is that of Peptide chain release factor 3 from Shewanella denitrificans (strain OS217 / ATCC BAA-1090 / DSM 15013).